An 875-amino-acid polypeptide reads, in one-letter code: Aminopeptidase M1-B (875 aa).

Positions 96 to 203 are required for membrane association; it reads IGEGVLKMDF…MSTYLVAIVV (108 aa). Substrate is bound by residues Glu-136 and 269 to 273; that span reads GAMEN. His-305 contributes to the Zn(2+) binding site. Glu-306 acts as the Proton acceptor in catalysis. Positions 309 and 328 each coordinate Zn(2+). The Dileucine internalization motif signature appears at 722–723; the sequence is LL.

Belongs to the peptidase M1 family. As to quaternary structure, homodimer. Requires Zn(2+) as cofactor.

It is found in the membrane. The protein resides in the microsome membrane. Its subcellular location is the cytoplasm. It carries out the reaction Release of an N-terminal amino acid, Xaa-|-Yaa- from a peptide, amide or arylamide. Xaa is preferably Ala, but may be most amino acids including Pro (slow action). When a terminal hydrophobic residue is followed by a prolyl residue, the two may be released as an intact Xaa-Pro dipeptide.. In Oryza sativa subsp. japonica (Rice), this protein is Aminopeptidase M1-B.